A 116-amino-acid polypeptide reads, in one-letter code: Ribosome-binding factor A (116 aa).

The protein belongs to the RbfA family. Monomer. Binds 30S ribosomal subunits, but not 50S ribosomal subunits or 70S ribosomes.

It localises to the cytoplasm. Functionally, one of several proteins that assist in the late maturation steps of the functional core of the 30S ribosomal subunit. Associates with free 30S ribosomal subunits (but not with 30S subunits that are part of 70S ribosomes or polysomes). Required for efficient processing of 16S rRNA. May interact with the 5'-terminal helix region of 16S rRNA. The sequence is that of Ribosome-binding factor A from Enterococcus faecalis (strain ATCC 700802 / V583).